Reading from the N-terminus, the 382-residue chain is Galactokinase (382 aa).

34–37 (EHTD) is a substrate binding site. 124–130 (GAGLSSS) contributes to the ATP binding site. Positions 130 and 162 each coordinate Mg(2+). Asp174 (proton acceptor) is an active-site residue. Residue Tyr223 participates in substrate binding.

Belongs to the GHMP kinase family. GalK subfamily.

It localises to the cytoplasm. It carries out the reaction alpha-D-galactose + ATP = alpha-D-galactose 1-phosphate + ADP + H(+). It functions in the pathway carbohydrate metabolism; galactose metabolism. Catalyzes the transfer of the gamma-phosphate of ATP to D-galactose to form alpha-D-galactose-1-phosphate (Gal-1-P). The chain is Galactokinase from Escherichia coli O1:K1 / APEC.